Reading from the N-terminus, the 104-residue chain is Probable quinol monooxygenase YgiN (104 aa).

In terms of domain architecture, ABM spans 2 to 100 (LTVIAEIRTR…DVLEMNIRIL (99 aa)).

In terms of assembly, homodimer.

The catalysed reaction is menadiol + 2 O2 = menadione + 2 superoxide + 2 H(+). Functionally, can oxidize menadiol to menadione. The polypeptide is Probable quinol monooxygenase YgiN (ygiN) (Escherichia coli O157:H7).